The following is a 466-amino-acid chain: Adenosylhomocysteinase (466 aa).

The substrate site is built by T57, D132, and E192. T193 to T195 serves as a coordination point for NAD(+). Substrate contacts are provided by K222 and D226. NAD(+)-binding positions include N227, G256–G261, E279, N314, I335–H337, and N380.

This sequence belongs to the adenosylhomocysteinase family. NAD(+) serves as cofactor.

The protein resides in the cytoplasm. It catalyses the reaction S-adenosyl-L-homocysteine + H2O = L-homocysteine + adenosine. It participates in amino-acid biosynthesis; L-homocysteine biosynthesis; L-homocysteine from S-adenosyl-L-homocysteine: step 1/1. May play a key role in the regulation of the intracellular concentration of adenosylhomocysteine. The protein is Adenosylhomocysteinase of Sinorhizobium medicae (strain WSM419) (Ensifer medicae).